We begin with the raw amino-acid sequence, 112 residues long: uncharacterized protein (112 aa).

Asn-29 and Asn-60 each carry an N-linked (GlcNAc...) asparagine; by host glycan. A helical membrane pass occupies residues 66-86; the sequence is IFNGLGFILIVIFIYLLLITL.

This sequence belongs to the asfivirus B117L family.

Its subcellular location is the host membrane. The protein resides in the virion. This is an uncharacterized protein from Ornithodoros (relapsing fever ticks).